Consider the following 446-residue polypeptide: Tubulin beta chain (446 aa).

Residues glutamine 11, glutamate 69, serine 138, glycine 142, threonine 143, glycine 144, asparagine 204, and asparagine 226 each contribute to the GTP site. Glutamate 69 lines the Mg(2+) pocket. Residues 423 to 446 (QQYQDAGVDEEEEEYEEEPLPEDE) are disordered. Residues 429–446 (GVDEEEEEYEEEPLPEDE) are compositionally biased toward acidic residues.

This sequence belongs to the tubulin family. In terms of assembly, dimer of alpha and beta chains. A typical microtubule is a hollow water-filled tube with an outer diameter of 25 nm and an inner diameter of 15 nM. Alpha-beta heterodimers associate head-to-tail to form protofilaments running lengthwise along the microtubule wall with the beta-tubulin subunit facing the microtubule plus end conferring a structural polarity. Microtubules usually have 13 protofilaments but different protofilament numbers can be found in some organisms and specialized cells. Requires Mg(2+) as cofactor.

The protein resides in the cytoplasm. It is found in the cytoskeleton. Functionally, tubulin is the major constituent of microtubules, a cylinder consisting of laterally associated linear protofilaments composed of alpha- and beta-tubulin heterodimers. Microtubules grow by the addition of GTP-tubulin dimers to the microtubule end, where a stabilizing cap forms. Below the cap, tubulin dimers are in GDP-bound state, owing to GTPase activity of alpha-tubulin. In Pestalotiopsis microspora, this protein is Tubulin beta chain (TUBB).